The following is a 173-amino-acid chain: Translation initiation factor IF-3 (173 aa).

Belongs to the IF-3 family. In terms of assembly, monomer.

It is found in the cytoplasm. In terms of biological role, IF-3 binds to the 30S ribosomal subunit and shifts the equilibrium between 70S ribosomes and their 50S and 30S subunits in favor of the free subunits, thus enhancing the availability of 30S subunits on which protein synthesis initiation begins. The polypeptide is Translation initiation factor IF-3 (Methylorubrum populi (strain ATCC BAA-705 / NCIMB 13946 / BJ001) (Methylobacterium populi)).